A 151-amino-acid chain; its full sequence is 6,7-dimethyl-8-ribityllumazine synthase (151 aa).

5-amino-6-(D-ribitylamino)uracil contacts are provided by residues Phe-23, 55 to 57 (AYE), and 79 to 81 (AVI). A (2S)-2-hydroxy-3-oxobutyl phosphate-binding site is contributed by 84 to 85 (AT). The active-site Proton donor is the His-87. 5-amino-6-(D-ribitylamino)uracil is bound at residue Phe-111. Arg-125 contributes to the (2S)-2-hydroxy-3-oxobutyl phosphate binding site.

The protein belongs to the DMRL synthase family.

The catalysed reaction is (2S)-2-hydroxy-3-oxobutyl phosphate + 5-amino-6-(D-ribitylamino)uracil = 6,7-dimethyl-8-(1-D-ribityl)lumazine + phosphate + 2 H2O + H(+). The protein operates within cofactor biosynthesis; riboflavin biosynthesis; riboflavin from 2-hydroxy-3-oxobutyl phosphate and 5-amino-6-(D-ribitylamino)uracil: step 1/2. Its function is as follows. Catalyzes the formation of 6,7-dimethyl-8-ribityllumazine by condensation of 5-amino-6-(D-ribitylamino)uracil with 3,4-dihydroxy-2-butanone 4-phosphate. This is the penultimate step in the biosynthesis of riboflavin. This chain is 6,7-dimethyl-8-ribityllumazine synthase, found in Leptospira interrogans serogroup Icterohaemorrhagiae serovar Lai (strain 56601).